The following is a 398-amino-acid chain: 4-hydroxy-3-methylbut-2-enyl diphosphate reductase (398 aa).

Cys66 provides a ligand contact to [4Fe-4S] cluster. His96 provides a ligand contact to (2E)-4-hydroxy-3-methylbut-2-enyl diphosphate. His96 provides a ligand contact to dimethylallyl diphosphate. Position 96 (His96) interacts with isopentenyl diphosphate. Residue Cys157 coordinates [4Fe-4S] cluster. A (2E)-4-hydroxy-3-methylbut-2-enyl diphosphate-binding site is contributed by His185. His185 provides a ligand contact to dimethylallyl diphosphate. His185 contributes to the isopentenyl diphosphate binding site. Glu187 serves as the catalytic Proton donor. Thr250 is a (2E)-4-hydroxy-3-methylbut-2-enyl diphosphate binding site. Position 288 (Cys288) interacts with [4Fe-4S] cluster. Positions 317, 318, 319, and 380 each coordinate (2E)-4-hydroxy-3-methylbut-2-enyl diphosphate. Dimethylallyl diphosphate contacts are provided by Ser317, Ser318, Asn319, and Ser380. Isopentenyl diphosphate contacts are provided by Ser317, Ser318, Asn319, and Ser380.

Belongs to the IspH family. [4Fe-4S] cluster serves as cofactor.

The enzyme catalyses isopentenyl diphosphate + 2 oxidized [2Fe-2S]-[ferredoxin] + H2O = (2E)-4-hydroxy-3-methylbut-2-enyl diphosphate + 2 reduced [2Fe-2S]-[ferredoxin] + 2 H(+). The catalysed reaction is dimethylallyl diphosphate + 2 oxidized [2Fe-2S]-[ferredoxin] + H2O = (2E)-4-hydroxy-3-methylbut-2-enyl diphosphate + 2 reduced [2Fe-2S]-[ferredoxin] + 2 H(+). It participates in isoprenoid biosynthesis; dimethylallyl diphosphate biosynthesis; dimethylallyl diphosphate from (2E)-4-hydroxy-3-methylbutenyl diphosphate: step 1/1. The protein operates within isoprenoid biosynthesis; isopentenyl diphosphate biosynthesis via DXP pathway; isopentenyl diphosphate from 1-deoxy-D-xylulose 5-phosphate: step 6/6. In terms of biological role, catalyzes the conversion of 1-hydroxy-2-methyl-2-(E)-butenyl 4-diphosphate (HMBPP) into a mixture of isopentenyl diphosphate (IPP) and dimethylallyl diphosphate (DMAPP). Acts in the terminal step of the DOXP/MEP pathway for isoprenoid precursor biosynthesis. This Prochlorococcus marinus subsp. pastoris (strain CCMP1986 / NIES-2087 / MED4) protein is 4-hydroxy-3-methylbut-2-enyl diphosphate reductase.